We begin with the raw amino-acid sequence, 510 residues long: MELSEWIDRHAGLEPGKTAIRFPERDLSYAQLAGLVERLASALKASGVAHRSCVAYLGYNSPEMLATLFACARLGALFMPLNWRLAGPEHRQLLADCPPSVLFVEPRFVAQIDAFRDALADVTLVAFDAPPQGWISYEALLERSGDAVPRDPQVGPQTPLLICYTSGTTGKPKGALLSQGALAWNAVNSIDLHELSADDRILTTLPLFHVGGLNNQTTPALSAGATVVLHPKFDADATFDAIEQERITLTVLVPAQLEMMIARPRWQSADLSSLRMITTGSTIVPERLIREVHRRGVPLVQIYGSTETCPIAAYVKPADAQRKAGSAGRAAPHCSLRIVGDDGHDVKPGATGEILVRGPNVMNAYWNDLQASAAVLKDGWFRTGDMGHQDGEGYLWVDGRKKEMIISGGENIYPAEIENLLGESPDIAEVAVVGRLDERWGEVVVAVVVPLEGRTLDAGHVLQLLEGRIARYKLPKEVVFLDELPRTALGKVRKDDVRQLVARKTFMEQT.

The protein belongs to the ATP-dependent AMP-binding enzyme family. Monomer.

The catalysed reaction is (indol-3-yl)acetate + ATP + CoA = (indol-3-yl)acetyl-CoA + AMP + diphosphate. It carries out the reaction (indol-3-yl)acetate + ATP + H(+) = (indol-3-yl)acetyl-AMP + diphosphate. The enzyme catalyses (indol-3-yl)acetyl-AMP + CoA = (indol-3-yl)acetyl-CoA + AMP + H(+). With respect to regulation, inhibited by high concentrations of substrates, and by the synthetic auxin compound 2,4-dichlorophenoxyacetate (2,4-D), which does not serve as substrate. Involved in degradation of indoleacetate, the most common member of the auxin class of plant hormones. Highly specific indoleacetate-CoA ligase which catalyzes the ATP-dependent activation of indoleacetate (IAA) to indoleacetyl-CoA. Also activates some closely related compounds such as the non-physiological compound (2-naphthyl)acetate and phenylacetate, which seems to be a fortuitous substrate for IaaB. This Aromatoleum aromaticum (strain DSM 19018 / LMG 30748 / EbN1) (Azoarcus sp. (strain EbN1)) protein is Indoleacetate--CoA ligase.